The chain runs to 513 residues: MQSVLVLDFGSQYTQLIARRIRELGIYSEILPYNTTPESIREHNPKAIILSGGPTSVYDASAILPDDGIFSLGIPMLGICYGLQVIAKHFGGEVASSSKHEFGRAKIMVAQDNEPESPLFHDIPDSDVWMSHGDKVMQLPEGFRVTASSENSEMCAFESFGSKGALKIYALQFHPEVQHTLYGKQLLSNFLITIAGITPDWSSKSFIEHQLEEISRKAGKETVICGISGGVDSTVAAVMVGKAIGKQLHCVFVDNGLLRKNEAEKVMTFLSTLGLRVTLVDASDLFLKRLKTVASPEKKRKIIGRTFIQVFEEQMEQEKFLVQGTLYPDVIESVSVKGPSETIKSHHNVGGLPKRMKLKLIEPLRELFKDEVRAVGRELGIAEDILMRHPFPGPGLAVRVLGSVTKERLDILRDADEIFIEELKSTGLYQKVWQAFAVLLPVQSVGVMGDKRTYENVLALRAVESSDGMTADWAQLPHDFLARVSNRIINEVRGINRVAYDISSKPPATIEWE.

The Glutamine amidotransferase type-1 domain maps to 3–200 (SVLVLDFGSQ…LITIAGITPD (198 aa)). The active-site Nucleophile is Cys-80. Catalysis depends on residues His-174 and Glu-176. A GMPS ATP-PPase domain is found at 201 to 388 (WSSKSFIEHQ…LGIAEDILMR (188 aa)). 228–234 (SGGVDST) serves as a coordination point for ATP.

As to quaternary structure, homodimer.

The catalysed reaction is XMP + L-glutamine + ATP + H2O = GMP + L-glutamate + AMP + diphosphate + 2 H(+). The protein operates within purine metabolism; GMP biosynthesis; GMP from XMP (L-Gln route): step 1/1. In terms of biological role, catalyzes the synthesis of GMP from XMP. This is GMP synthase [glutamine-hydrolyzing] from Pelodictyon phaeoclathratiforme (strain DSM 5477 / BU-1).